A 390-amino-acid polypeptide reads, in one-letter code: Sister chromatid cohesion protein DCC1 (390 aa).

It belongs to the DCC1 family. Component of the ctf18-RFC complex which consists of ctf18, ctf8, dscc1 and the RFC complex.

The protein resides in the nucleus. Functionally, loads pcna onto primed templates regulating velocity, spacing and restart activity of replication forks. May couple DNA replication to sister chromatid cohesion. This Xenopus laevis (African clawed frog) protein is Sister chromatid cohesion protein DCC1 (dscc1).